The primary structure comprises 235 residues: LexA repressor (235 aa).

The segment at residues 26–46 (FDEMKDALDLKSKSGIHRLIT) is a DNA-binding region (H-T-H motif). Active-site for autocatalytic cleavage activity residues include serine 156 and lysine 194.

Belongs to the peptidase S24 family. In terms of assembly, homodimer.

It catalyses the reaction Hydrolysis of Ala-|-Gly bond in repressor LexA.. Represses a number of genes involved in the response to DNA damage (SOS response), including recA and lexA. In the presence of single-stranded DNA, RecA interacts with LexA causing an autocatalytic cleavage which disrupts the DNA-binding part of LexA, leading to derepression of the SOS regulon and eventually DNA repair. The chain is LexA repressor from Paramagnetospirillum magneticum (strain ATCC 700264 / AMB-1) (Magnetospirillum magneticum).